Reading from the N-terminus, the 334-residue chain is Phospholipase A1 2 (334 aa).

Positions 1-23 (MMNLKYLLFFCLVQALHYCYAYG) are cleaved as a signal peptide. Residues 24–33 (DPSLSNELDR) constitute a propeptide that is removed on maturation. C37 and C120 are joined by a disulfide. S170 serves as the catalytic Nucleophile. D198 functions as the Charge relay system in the catalytic mechanism. Intrachain disulfides connect C209/C214 and C252/C261. The active-site Charge relay system is H263. 3 disulfide bridges follow: C278–C302, C279–C327, and C295–C300.

It belongs to the AB hydrolase superfamily. Lipase family. Not glycosylated. As to expression, expressed by the venom gland.

The protein resides in the secreted. The enzyme catalyses a 1,2-diacyl-sn-glycero-3-phosphocholine + H2O = a 2-acyl-sn-glycero-3-phosphocholine + a fatty acid + H(+). Functionally, catalyzes the hydrolysis of phosphatidylcholine with phospholipase A1 activity (6.3 U/ml). May act as an allergen and induce hemolytic activity. The polypeptide is Phospholipase A1 2 (Vespa affinis (Lesser banded hornet)).